Consider the following 185-residue polypeptide: Threonylcarbamoyl-AMP synthase (185 aa).

The region spanning 4–185 (SWRVQQAAQD…IATAQIVRAG (182 aa)) is the YrdC-like domain.

This sequence belongs to the SUA5 family. TsaC subfamily.

It localises to the cytoplasm. The catalysed reaction is L-threonine + hydrogencarbonate + ATP = L-threonylcarbamoyladenylate + diphosphate + H2O. In terms of biological role, required for the formation of a threonylcarbamoyl group on adenosine at position 37 (t(6)A37) in tRNAs that read codons beginning with adenine. Catalyzes the conversion of L-threonine, HCO(3)(-)/CO(2) and ATP to give threonylcarbamoyl-AMP (TC-AMP) as the acyladenylate intermediate, with the release of diphosphate. This is Threonylcarbamoyl-AMP synthase from Pseudomonas syringae pv. syringae (strain B728a).